We begin with the raw amino-acid sequence, 523 residues long: Solute carrier family 2, facilitated glucose transporter member 2 (523 aa).

The Cytoplasmic segment spans residues M1–L10. A helical transmembrane segment spans residues A11 to I31. Topologically, residues N32 to S97 are extracellular. The N-linked (GlcNAc...) asparagine glycan is linked to N62. Residues L98–G118 traverse the membrane as a helical segment. Over D119 to A126 the chain is Cytoplasmic. The chain crosses the membrane as a helical span at residues M127–G147. Over P148 to R157 the chain is Extracellular. The helical transmembrane segment at S158–I178 threads the bilayer. Residues A179 to A186 lie on the Cytoplasmic side of the membrane. Residues L187–L207 form a helical membrane-spanning segment. Q192 contributes to the D-glucose binding site. Residues S208–H216 lie on the Extracellular side of the membrane. A helical membrane pass occupies residues W217 to F237. Over C238–P302 the chain is Cytoplasmic. The chain crosses the membrane as a helical span at residues I303–Y323. Residues Q313–Q314 and N319 each bind D-glucose. Topologically, residues Y324–P337 are extracellular. Residues V338–L358 form a helical membrane-spanning segment. N348 contacts D-glucose. Residues V359–L367 are Cytoplasmic-facing. The helical transmembrane segment at F368–L388 threads the bilayer. The Extracellular portion of the chain corresponds to L389–T401. The helical transmembrane segment at A402 to V422 threads the bilayer. D-glucose contacts are provided by E411 and W419. Topologically, residues A423–P432 are cytoplasmic. A helical transmembrane segment spans residues T433–F453. At Q454–L460 the chain is on the extracellular side. The helical transmembrane segment at G461–F481 threads the bilayer. The Cytoplasmic segment spans residues K482–V523. Position 522 is a phosphoserine (S522).

This sequence belongs to the major facilitator superfamily. Sugar transporter (TC 2.A.1.1) family. Glucose transporter subfamily. Post-translationally, N-glycosylated; required for stability and retention at the cell surface of pancreatic beta cells. In embryo, expressed in endoderm layer of yolk sac and liver primordium.

The protein resides in the cell membrane. It catalyses the reaction D-glucose(out) = D-glucose(in). It carries out the reaction D-fructose(out) = D-fructose(in). The enzyme catalyses L-dehydroascorbate(out) = L-dehydroascorbate(in). The catalysed reaction is D-galactose(in) = D-galactose(out). D-glucose and maltose competitively inhibit fructose transport. D-glucose, D-fructose and maltose inhibit deoxyglucose transport. Its function is as follows. Facilitative hexose transporter that mediates the transport of glucose, fructose and galactose. Likely mediates the bidirectional transfer of glucose across the plasma membrane of hepatocytes and is responsible for uptake of glucose by the beta cells; may comprise part of the glucose-sensing mechanism of the beta cell. May also participate with the Na(+)/glucose cotransporter in the transcellular transport of glucose in the small intestine and kidney. Also able to mediate the transport of dehydroascorbate. This chain is Solute carrier family 2, facilitated glucose transporter member 2, found in Mus musculus (Mouse).